A 386-amino-acid polypeptide reads, in one-letter code: Enamidase (386 aa).

Residues His67, His69, and Glu164 each coordinate Zn(2+). 3 residues coordinate Fe cation: Glu164, His193, and His220. Asp276 lines the Zn(2+) pocket.

Homotetramer. Dimer of dimers. It depends on Fe cation as a cofactor. Zn(2+) serves as cofactor.

It carries out the reaction 1,4,5,6-tetrahydro-6-oxonicotinate + 2 H2O = 2-formylglutarate + NH4(+). Its pathway is cofactor degradation; nicotinate degradation; propanoate and pyruvate from 6-hydroxynicotinate: step 2/8. Decyclization of 6-oxo-1,4,5,6-tetrahydronicotinate to form 2-(enamine)glutarate, followed by hydrolysis to form (S)-2-formylglutarate. This chain is Enamidase, found in Eubacterium barkeri (Clostridium barkeri).